The following is a 335-amino-acid chain: Beta-hexosaminidase (335 aa).

Residues aspartate 60, arginine 68, arginine 133, and lysine 163 to histidine 164 contribute to the substrate site. Histidine 176 (proton donor/acceptor) is an active-site residue. Aspartate 247 acts as the Nucleophile in catalysis.

It belongs to the glycosyl hydrolase 3 family. NagZ subfamily.

It is found in the cytoplasm. The enzyme catalyses Hydrolysis of terminal non-reducing N-acetyl-D-hexosamine residues in N-acetyl-beta-D-hexosaminides.. The protein operates within cell wall biogenesis; peptidoglycan recycling. Its function is as follows. Plays a role in peptidoglycan recycling by cleaving the terminal beta-1,4-linked N-acetylglucosamine (GlcNAc) from peptide-linked peptidoglycan fragments, giving rise to free GlcNAc, anhydro-N-acetylmuramic acid and anhydro-N-acetylmuramic acid-linked peptides. This Stenotrophomonas maltophilia (strain R551-3) protein is Beta-hexosaminidase.